Consider the following 207-residue polypeptide: B2 protein (207 aa).

The interval 1 to 68 (MIDQEESNFN…FKTLPPAESL (68 aa)) is disordered. Composition is skewed to low complexity over residues 8 to 26 (NFNFNFNQPQQPQQQQFHG) and 35 to 52 (KNNNNNSESGNKNGGENK). The DCD domain maps to 72 to 204 (ETVGGYIFVC…AISLLDIFEE (133 aa)).

The chain is B2 protein from Daucus carota (Wild carrot).